We begin with the raw amino-acid sequence, 300 residues long: Probable endonuclease 4 (300 aa).

Residues histidine 69, histidine 110, glutamate 145, aspartate 179, histidine 182, histidine 214, aspartate 227, histidine 229, and glutamate 259 each contribute to the Zn(2+) site.

This sequence belongs to the AP endonuclease 2 family. It depends on Zn(2+) as a cofactor.

It carries out the reaction Endonucleolytic cleavage to 5'-phosphooligonucleotide end-products.. In terms of biological role, endonuclease IV plays a role in DNA repair. It cleaves phosphodiester bonds at apurinic or apyrimidinic (AP) sites, generating a 3'-hydroxyl group and a 5'-terminal sugar phosphate. This is Probable endonuclease 4 from Lachnoclostridium phytofermentans (strain ATCC 700394 / DSM 18823 / ISDg) (Clostridium phytofermentans).